We begin with the raw amino-acid sequence, 213 residues long: Adenylate kinase (213 aa).

10-15 (GAGKGT) provides a ligand contact to ATP. Positions 30-59 (STGDMFRAAIKEGTEMGKKAKEYMDKGALV) are NMP. AMP contacts are provided by residues threonine 31, arginine 36, 57–59 (ALV), 85–88 (GFPR), and glutamine 92. The tract at residues 126–163 (GRRVCKNCGASYHVIFNPPQAEGKCNSCNGELYQRSDD) is LID. Arginine 127 contributes to the ATP binding site. Zn(2+)-binding residues include cysteine 130 and cysteine 133. Position 136–137 (136–137 (SY)) interacts with ATP. Positions 150 and 153 each coordinate Zn(2+). Residues arginine 160 and arginine 171 each coordinate AMP. Glutamine 199 is a binding site for ATP.

Belongs to the adenylate kinase family. Monomer.

The protein resides in the cytoplasm. It catalyses the reaction AMP + ATP = 2 ADP. The protein operates within purine metabolism; AMP biosynthesis via salvage pathway; AMP from ADP: step 1/1. In terms of biological role, catalyzes the reversible transfer of the terminal phosphate group between ATP and AMP. Plays an important role in cellular energy homeostasis and in adenine nucleotide metabolism. The chain is Adenylate kinase from Desulforamulus reducens (strain ATCC BAA-1160 / DSM 100696 / MI-1) (Desulfotomaculum reducens).